Reading from the N-terminus, the 364-residue chain is Fructose-1,6-bisphosphatase class 1 1 (364 aa).

The Mg(2+) site is built by glutamate 99, aspartate 121, leucine 123, and aspartate 124. Substrate contacts are provided by residues 124 to 127 and asparagine 220; that span reads DGSS. A Mg(2+)-binding site is contributed by glutamate 292.

The protein belongs to the FBPase class 1 family. In terms of assembly, homotetramer. Mg(2+) serves as cofactor.

The protein resides in the cytoplasm. The enzyme catalyses beta-D-fructose 1,6-bisphosphate + H2O = beta-D-fructose 6-phosphate + phosphate. Its pathway is carbohydrate biosynthesis; gluconeogenesis. The sequence is that of Fructose-1,6-bisphosphatase class 1 1 from Albidiferax ferrireducens (strain ATCC BAA-621 / DSM 15236 / T118) (Rhodoferax ferrireducens).